The following is a 416-amino-acid chain: Putative gustatory receptor 57a (416 aa).

At Met-1 to Val-13 the chain is on the cytoplasmic side. A helical transmembrane segment spans residues Phe-14 to Ile-34. The Extracellular segment spans residues Arg-35–Tyr-48. A helical membrane pass occupies residues Ser-49–Ala-69. Over Glu-70–Leu-83 the chain is Cytoplasmic. Residues Val-84 to Ile-104 form a helical membrane-spanning segment. Over Ser-105–Lys-143 the chain is Extracellular. Residues Asn-144–Val-164 form a helical membrane-spanning segment. The Cytoplasmic segment spans residues Gln-165–Arg-171. The chain crosses the membrane as a helical span at residues Ala-172–Gly-192. The Extracellular portion of the chain corresponds to Tyr-193–Arg-295. A glycan (N-linked (GlcNAc...) asparagine) is linked at Asn-290. The chain crosses the membrane as a helical span at residues Met-296–Phe-316. Residues Tyr-317 to Lys-374 lie on the Cytoplasmic side of the membrane. A helical membrane pass occupies residues Val-375–Met-395. Residues Thr-396–Phe-416 are Extracellular-facing.

The protein belongs to the insect chemoreceptor superfamily. Gustatory receptor (GR) family. Gr57a subfamily. In larvae, is expressed in neurons of the terminal external chemosensory organ as well as in the dorsal pharyngeal sense organ.

Its subcellular location is the cell membrane. Functionally, probable gustatory receptor which mediates acceptance or avoidance behavior, depending on its substrates. The sequence is that of Putative gustatory receptor 57a (Gr57a) from Drosophila melanogaster (Fruit fly).